The primary structure comprises 543 residues: MSSINLSSSSPSTISLSRSRLSQSSTTLLHGLHRVTLPSNHPLSTFSIKTNTGKVKAAVISREDDLLSFTNGNTPLSNGSLIDDRTEEPLEADSVSLGTLAADSAPAPANGFVAEDDDFELDLPTPGFSSIPEAIEDIRQGKLVVVVDDEDRENEGDLVMAAQLATPEAMAFIVRHGTGIVCVSMKEDDLERLHLPLMVNQKENEEKLSTAFTVTVDAKHGTTTGVSARDRATTILSLASRDSKPEDFNRPGHIFPLKYREGGVLKRAGHTEASVDLTVLAGLDPVGVLCEIVDDDGSMARLPKLREFAAENNLKVVSIADLIRYRRKRDKLVERASAARIPTMWGPFTAYCYRSILDGIEHIAMVKGEIGDGQDILVRVHSECLTGDIFGSARCDCGNQLALSMQQIEATGRGVLVYLRGHEGRGIGLGHKLRAYNLQDAGRDTVEANEELGLPVDSREYGIGAQIIRDLGVRTMKLMTNNPAKYVGLKGYGLAIVGRVPLLSLITKENKRYLETKRTKMGHMYGLKFKGDVVEKIESESES.

The transit peptide at methionine 1 to lysine 56 directs the protein to the chloroplast. The segment at alanine 57–lysine 328 is DHBP synthase. Residues arginine 152–glutamate 153, aspartate 157, arginine 267–threonine 271, and glutamate 291 contribute to the D-ribulose 5-phosphate site. Glutamate 153 contacts Mg(2+). A Mg(2+)-binding site is contributed by histidine 270. Residues arginine 329 to serine 543 form a GTP cyclohydrolase II region. Arginine 379 to glutamate 383 serves as a coordination point for GTP. The Zn(2+) site is built by cysteine 384, cysteine 395, and cysteine 397. GTP contacts are provided by residues glutamine 400, glutamate 423–arginine 425, and threonine 445. The active-site Proton acceptor; for GTP cyclohydrolase activity is the aspartate 457. Catalysis depends on arginine 459, which acts as the Nucleophile; for GTP cyclohydrolase activity. GTP contacts are provided by threonine 480 and lysine 485.

This sequence in the N-terminal section; belongs to the DHBP synthase family. The protein in the C-terminal section; belongs to the GTP cyclohydrolase II family. Requires Mg(2+) as cofactor. Mn(2+) is required as a cofactor. It depends on Zn(2+) as a cofactor. As to expression, expressed in leaves, shoots, roots, flowers and siliques.

It is found in the plastid. The protein localises to the chloroplast. It carries out the reaction D-ribulose 5-phosphate = (2S)-2-hydroxy-3-oxobutyl phosphate + formate + H(+). The enzyme catalyses GTP + 4 H2O = 2,5-diamino-6-hydroxy-4-(5-phosphoribosylamino)-pyrimidine + formate + 2 phosphate + 3 H(+). It participates in cofactor biosynthesis; riboflavin biosynthesis; 2-hydroxy-3-oxobutyl phosphate from D-ribulose 5-phosphate: step 1/1. It functions in the pathway cofactor biosynthesis; riboflavin biosynthesis; 5-amino-6-(D-ribitylamino)uracil from GTP: step 1/4. In terms of biological role, involved in riboflavin biosynthesis. Catalyzes both the conversion of D-ribulose 5-phosphate to formate and 3,4-dihydroxy-2-butanone 4-phosphate and the conversion of GTP to 2,5-diamino-6-ribosylamino-4(3H)-pyrimidinone 5'-phosphate (DARP), formate and pyrophosphate. RIBA2 and RIBA3 together are not able to complement the loss of function of RIBA1. This chain is Bifunctional riboflavin biosynthesis protein RIBA 1, chloroplastic (RIBA1), found in Arabidopsis thaliana (Mouse-ear cress).